Consider the following 696-residue polypeptide: Spermatogenesis-associated protein 21 (696 aa).

Disordered regions lie at residues 1 to 301 and 329 to 386; these read MDNR…AAGT and LKAR…SVPT. Basic and acidic residues predominate over residues 67–86; that stretch reads KGPRYRDTFKEGPSELRTQE. Polar residues predominate over residues 96–116; that stretch reads KQSSWVPQEGSQELQAGQDQS. A compositionally biased stretch (basic and acidic residues) spans 195-209; the sequence is GDKRPKEADVPHIRP. Over residues 223–235 the composition is skewed to polar residues; sequence DSSQEAMPPTSTV. The span at 275 to 287 shows a compositional bias: basic and acidic residues; sequence EVRDIGERREPDR. Composition is skewed to low complexity over residues 288 to 297 and 339 to 366; these read VQQQPQKPVV and SPRT…SGPS. A coiled-coil region spans residues 424-451; sequence EPEEQSLQKLYQNREKSEEQLTLKQEEA. An EF-hand domain is found at 481-516; that stretch reads VTPAQVEDALMSADVNGDGHVDFKDFLAVMTDTRRF. D494, N496, D498, H500, and D505 together coordinate Ca(2+). The segment at 646–696 is disordered; that stretch reads KPTNHYVQDQCTTPGLAPDIRSPFFQSRSQGNREHNSDSRKWPSSVPSRTH. Residues 676–686 are compositionally biased toward basic and acidic residues; sequence GNREHNSDSRK.

In terms of biological role, involved in the differentiation of haploid spermatids. This Macaca fascicularis (Crab-eating macaque) protein is Spermatogenesis-associated protein 21 (SPATA21).